The chain runs to 398 residues: Putative F-box protein At3g17620 (398 aa).

One can recognise an F-box domain in the interval 1–45 (MMSDLPRDLLEERLSRVPVKSLREARFTCKNWKTLSKKRSFTKKH).

This is Putative F-box protein At3g17620 from Arabidopsis thaliana (Mouse-ear cress).